We begin with the raw amino-acid sequence, 525 residues long: Vesicular inhibitory amino acid transporter (525 aa).

The Cytoplasmic portion of the chain corresponds to 1-132; the sequence is MATLLRSKLS…WNVTNAIQGM (132 aa). The disordered stretch occupies residues 69–111; the sequence is PCGDEGAEPPVEGDIHYQRGSGAPLPPSGSKDQVGAGGEFGGH. The chain crosses the membrane as a helical span at residues 133–153; that stretch reads FVLGLPYAILHGGYLGLFLII. Over 154–204 the chain is Lumenal, vesicle; it reads FAAVVCCYTGKILIACLYEENEDGEVVRVRDSYVAIANACCAPRFPTLGGR. 3'-nitrotyrosine is present on Y186. The chain crosses the membrane as a helical span at residues 205-225; it reads VVNVAQIIELVMTCILYVVVS. Over 226 to 265 the chain is Cytoplasmic; it reads GNLMYNSFPGLPVSQKSWSIIATAVLLPCAFLKNLKAVSK. A helical membrane pass occupies residues 266 to 286; it reads FSLLCTLAHFVINILVIAYCL. Topologically, residues 287-305 are lumenal, vesicle; the sequence is SRARDWAWEKVKFYIDVKK. Residues 306–326 form a helical membrane-spanning segment; it reads FPISIGIIVFSYTSQIFLPSL. At 327-341 the chain is on the cytoplasmic side; the sequence is EGNMQQPSEFHCMMN. The chain crosses the membrane as a helical span at residues 342–362; that stretch reads WTHIAACVLKGLFALVAYLTW. Residues 363–383 are Lumenal, vesicle-facing; that stretch reads ADETKEVITDNLPGSIRAVVN. The chain crosses the membrane as a helical span at residues 384-404; the sequence is IFLVAKALLSYPLPFFAAVEV. At 405–438 the chain is on the cytoplasmic side; it reads LEKSLFQEGSRAFFPACYGGDGRLKSWGLTLRCA. Residues 439 to 459 traverse the membrane as a helical segment; sequence LVVFTLLMAIYVPHFALLMGL. Over 460–461 the chain is Lumenal, vesicle; the sequence is TG. Residues 462–482 traverse the membrane as a helical segment; sequence SLTGAGLCFLLPSLFHLRLLW. Residues 483 to 489 lie on the Cytoplasmic side of the membrane; the sequence is RKLLWHQ. The chain crosses the membrane as a helical span at residues 490–510; that stretch reads VFFDVAIFVIGGICSVSGFVH. Residues 511–525 lie on the Lumenal, vesicle side of the membrane; it reads SLEGLIEAYRTNAED.

This sequence belongs to the amino acid/polyamine transporter 2 family.

It is found in the cytoplasmic vesicle membrane. Its subcellular location is the presynapse. It carries out the reaction 4-aminobutanoate(out) + n H(+)(in) = 4-aminobutanoate(in) + n H(+)(out). It catalyses the reaction glycine(out) + n H(+)(in) = glycine(in) + n H(+)(out). The enzyme catalyses beta-alanine(out) + n H(+)(in) = beta-alanine(in) + n H(+)(out). Functionally, antiporter that exchanges vesicular protons for cytosolic 4-aminobutanoate or to a lesser extend glycine, thus allowing their secretion from nerve terminals. The transport is equally dependent on the chemical and electrical components of the proton gradient. May also transport beta-alanine. Acidification of GABAergic synaptic vesicles is a prerequisite for 4-aminobutanoate uptake. The protein is Vesicular inhibitory amino acid transporter of Macaca fascicularis (Crab-eating macaque).